A 446-amino-acid polypeptide reads, in one-letter code: Packaging protein 1 (446 aa).

Residues 1–10 (METRGRRRAF) show a composition bias toward basic residues. Residues 1–74 (METRGRRRAF…PSQPPQPRSL (74 aa)) form a disordered region. Residue 170 to 177 (GPTGCGKS) participates in ATP binding. Positions 439-446 (RAYRKRNK) are DNA-binding.

The protein belongs to the adenoviridae packaging protein 1 family. In terms of assembly, homodimer. Part of a genome packaging complex composed of packaging proteins 1, 2 and 3; this complex specifically binds to the packaging sequence on the left end of viral genomic DNA and performs packaging of the viral genome. Interacts with protein 33K.

The protein resides in the virion. It is found in the host nucleus. It localises to the host nucleoplasm. Its subcellular location is the host nucleolus. Component of the packaging machinery which encapsidates the viral DNA into preformed capsids and transcriptional activator of the viral major late promoter (MLP). Binds, along with packaging proteins 2 and 3, to the specific packaging sequence on the left end of viral genomic DNA and displays ATPase activity thereby providing the power stroke of the packaging machinery. The activity of packaging protein IVa2 is stimulated by protein 33K which acts as a terminase. May be the protein that pumps DNA into the capsid powered by ATP hydrolysis. Specifically binds to the 5'-CG-3' nucleotides of the repeats making up the packaging sequence. Component of the DEF-A and DEF-B transcription factors that bind downstream elements of the major late promoter (MLP), and stimulate transcription from the MLP after initiation of viral DNA replication. DEF-A is a heterodimer packaging proteins 1 and 2 and DEF-B is a homodimer of packaging protein 1. In Human adenovirus F serotype 40 (HAdV-40), this protein is Packaging protein 1.